Here is a 252-residue protein sequence, read N- to C-terminus: Ribosomal RNA small subunit methyltransferase NEP1 (252 aa).

S-adenosyl-L-methionine is bound by residues methionine 176, glycine 209, glycine 214, and 227–232 (ISNYPL).

Belongs to the class IV-like SAM-binding methyltransferase superfamily. RNA methyltransferase NEP1 family. Homodimer. Part of the small subunit (SSU) processome, composed of more than 70 proteins and the RNA chaperone small nucleolar RNA (snoRNA) U3.

The protein localises to the nucleus. The protein resides in the nucleolus. The enzyme catalyses a pseudouridine in rRNA + S-adenosyl-L-methionine = an N(1)-methylpseudouridine in rRNA + S-adenosyl-L-homocysteine + H(+). Functionally, S-adenosyl-L-methionine-dependent pseudouridine N(1)-methyltransferase that methylates a pseudouridine in 18S rRNA. Involved the biosynthesis of the hypermodified N1-methyl-N3-(3-amino-3-carboxypropyl) pseudouridine (m1acp3-Psi) conserved in eukaryotic 18S rRNA. Also has an essential role in 40S ribosomal subunit biogenesis independent on its methyltransferase activity, facilitating the incorporation of ribosomal protein S19 during the formation of pre-ribosomes. Its function is as follows. S-adenosyl-L-methionine-dependent pseudouridine N(1)-methyltransferase that methylates pseudouridine at position in 18S rRNA. Involved the biosynthesis of the hypermodified N1-methyl-N3-(3-amino-3-carboxypropyl) pseudouridine (m1acp3-Psi) conserved in eukaryotic 18S rRNA. Is not able to methylate uridine at this position. Also has an essential role in 40S ribosomal subunit biogenesis independent on its methyltransferase activity, facilitating the incorporation of ribosomal protein S19 during the formation of pre-ribosomes. Part of the small subunit (SSU) processome, first precursor of the small eukaryotic ribosomal subunit. During the assembly of the SSU processome in the nucleolus, many ribosome biogenesis factors, an RNA chaperone and ribosomal proteins associate with the nascent pre-rRNA and work in concert to generate RNA folding, modifications, rearrangements and cleavage as well as targeted degradation of pre-ribosomal RNA by the RNA exosome. The chain is Ribosomal RNA small subunit methyltransferase NEP1 from Drosophila melanogaster (Fruit fly).